The primary structure comprises 2026 residues: E3 ubiquitin-protein ligase TRIP12 (2026 aa).

Polar residues-rich tracts occupy residues 1–10 (MSNRPNSNPG), 32–42 (GRNSLSLSVGS), and 73–84 (SSVSEPNITFSP). The tract at residues 1–437 (MSNRPNSNPG…SGESESDDSE (437 aa)) is disordered. Composition is skewed to low complexity over residues 94 to 112 (SSHF…AISP), 135 to 161 (AEPA…STPS), 171 to 188 (LLSS…SAAG), and 199 to 241 (AAKP…SSAA). Residues 359–371 (QKTTGSCASTSRR) are compositionally biased toward polar residues. Positions 379–391 (GAAEARRQEKMAD) are enriched in basic and acidic residues. Polar residues predominate over residues 392-404 (SDNNQDGANSSAA). The span at 412–430 (GASASSSVAGAVGMTTSGE) shows a compositional bias: low complexity. One can recognise a WWE domain in the interval 789–876 (MLKKGSAQTT…DPELAKCFIK (88 aa)). Disordered regions lie at residues 1008–1123 (SNVT…SVSN) and 1441–1470 (GCKD…KQDE). Positions 1040–1053 (KRKRLPKRGPRRPK) are enriched in basic residues. Over residues 1056-1065 (PPRDDDKVDN) the composition is skewed to basic and acidic residues. Residues 1068–1079 (KSPTTTQSPKSS) show a composition bias toward low complexity. Residues 1094 to 1104 (TQANSANSEPS) show a composition bias toward polar residues. The tract at residues 1530–1604 (EIIPTGEFIN…AMQRLLDTNP (75 aa)) is K-box. The region spanning 1919 to 2026 (PDHGYTHDSR…REGQQSFHLS (108 aa)) is the HECT domain. Cys-1993 acts as the Glycyl thioester intermediate in catalysis.

Belongs to the UPL family. K-HECT subfamily.

It is found in the nucleus. It localises to the nucleoplasm. It catalyses the reaction S-ubiquitinyl-[E2 ubiquitin-conjugating enzyme]-L-cysteine + [acceptor protein]-L-lysine = [E2 ubiquitin-conjugating enzyme]-L-cysteine + N(6)-ubiquitinyl-[acceptor protein]-L-lysine.. It participates in protein modification; protein ubiquitination. Functionally, E3 ubiquitin-protein ligase involved in ubiquitin fusion degradation (UFD) pathway and regulation of DNA repair. Part of the ubiquitin fusion degradation (UFD) pathway, a process that mediates ubiquitination of protein at their N-terminus, regardless of the presence of lysine residues in target proteins. Acts as a key regulator of DNA damage response by acting as a suppressor of RNF168, an E3 ubiquitin-protein ligase that promotes accumulation of 'Lys-63'-linked histone H2A and H2AX at DNA damage sites, thereby acting as a guard against excessive spreading of ubiquitinated chromatin at damaged chromosomes. The sequence is that of E3 ubiquitin-protein ligase TRIP12 (trip12) from Danio rerio (Zebrafish).